A 348-amino-acid chain; its full sequence is MKNLLGCSVKDLENVALNYGQAAFRGRQIYSWLYNYKNRSKSIDEINVLPLNFRNQLKKEGFIFGELILKEKYLANDGTLKLLLNTRDNESVECVGIPTEKRLTACLSSQVGCPMDCKFCATGKEGLKRSLKASEILDQILFIENEMNQKVTNIVFMGMGEPLLNIDELLFSIRSINEDFDVSQRRITVSTVAIPNMIRKLSEMSFQVLGKCQFTLAISLHASNQKTRETIIPSAKNYHIKYIIDDCREFVKKTGRRVSFEYLMLHGVNDKLEHADELSNLIKGFQCHVNLIQYNQIEEVEFKQTPSKNAQLFQNRLSNNGINVSLRKSRGSDRNAACGQLRQNAKIK.

The active-site Proton acceptor is Glu93. A Radical SAM core domain is found at 99–333 (TEKRLTACLS…VSLRKSRGSD (235 aa)). Cys106 and Cys338 are disulfide-bonded. [4Fe-4S] cluster-binding residues include Cys113, Cys117, and Cys120. Residues 160–161 (GE), Ser190, 219–221 (SLH), and Asn295 each bind S-adenosyl-L-methionine. Cys338 functions as the S-methylcysteine intermediate in the catalytic mechanism.

Belongs to the radical SAM superfamily. RlmN family. It depends on [4Fe-4S] cluster as a cofactor.

It localises to the cytoplasm. The enzyme catalyses adenosine(2503) in 23S rRNA + 2 reduced [2Fe-2S]-[ferredoxin] + 2 S-adenosyl-L-methionine = 2-methyladenosine(2503) in 23S rRNA + 5'-deoxyadenosine + L-methionine + 2 oxidized [2Fe-2S]-[ferredoxin] + S-adenosyl-L-homocysteine. It catalyses the reaction adenosine(37) in tRNA + 2 reduced [2Fe-2S]-[ferredoxin] + 2 S-adenosyl-L-methionine = 2-methyladenosine(37) in tRNA + 5'-deoxyadenosine + L-methionine + 2 oxidized [2Fe-2S]-[ferredoxin] + S-adenosyl-L-homocysteine. Functionally, specifically methylates position 2 of adenine 2503 in 23S rRNA and position 2 of adenine 37 in tRNAs. The chain is Probable dual-specificity RNA methyltransferase RlmN from Prochlorococcus marinus (strain MIT 9515).